Consider the following 85-residue polypeptide: Neurtoxin 10 (85 aa).

Positions 1–23 (MKFCVAVSLLIIASMAGVISVSG) are cleaved as a signal peptide. The 62-residue stretch at 24–85 (YDVYPRDYAE…NFLSVIWKHC (62 aa)) folds into the LCN-type CS-alpha/beta domain. 3 disulfide bridges follow: Cys-38–Cys-60, Cys-46–Cys-65, and Cys-50–Cys-67.

Belongs to the long (3 C-C) scorpion toxin superfamily. Expressed by the venom gland.

The protein resides in the secreted. The chain is Neurtoxin 10 from Lychas mucronatus (Chinese swimming scorpion).